The sequence spans 375 residues: Alanine racemase, catabolic (375 aa).

Catalysis depends on lysine 38, which acts as the Proton acceptor; specific for D-alanine. Lysine 38 bears the N6-(pyridoxal phosphate)lysine mark. Tyrosine 269 serves as the catalytic Proton acceptor; specific for L-alanine.

The protein belongs to the alanine racemase family. It depends on pyridoxal 5'-phosphate as a cofactor.

It carries out the reaction L-alanine = D-alanine. It participates in amino-acid biosynthesis; D-alanine biosynthesis; D-alanine from L-alanine: step 1/1. The polypeptide is Alanine racemase, catabolic (alr1) (Schizosaccharomyces pombe (strain 972 / ATCC 24843) (Fission yeast)).